The following is a 336-amino-acid chain: CENP-A histone chaperone scm3 (336 aa).

Residues 243 to 269 (RRRNPLLSSPKTPLRRSFSKSKVRNSN) are disordered. Positions 255–269 (PLRRSFSKSKVRNSN) are enriched in basic residues.

The protein localises to the cytoplasm. Its subcellular location is the nucleus. Its function is as follows. Centromeric protein that plays a central role in the incorporation and maintenance of histone H3-like variant CENPA at centromeres. The polypeptide is CENP-A histone chaperone scm3 (Schizosaccharomyces pombe (strain 972 / ATCC 24843) (Fission yeast)).